Here is a 228-residue protein sequence, read N- to C-terminus: Aquaporin Z (228 aa).

2 helical membrane-spanning segments follow: residues 1–21 (MLNKLSAEFFGTFWLVFGGCG) and 23–43 (AILAAAFPELGIGFLGVALAF). An NPA 1 motif is present at residues 63 to 65 (NPA). Helical transmembrane passes span 82–102 (IPYWVAQVLGAIAAAAILYVI), 129–149 (MMAGLLIEIILTAFFIIIILG), and 154–174 (LAPAGFAPIAIGFGLTLIHLV). An NPA 2 motif is present at residues 184–186 (NPA). The helical transmembrane segment at 205-225 (LFWVAPLVGAVIGAIIWKGLL) threads the bilayer.

Belongs to the MIP/aquaporin (TC 1.A.8) family. Homotetramer.

It localises to the cell inner membrane. The enzyme catalyses H2O(in) = H2O(out). In terms of biological role, channel that permits osmotically driven movement of water in both directions. It is involved in the osmoregulation and in the maintenance of cell turgor during volume expansion in rapidly growing cells. It mediates rapid entry or exit of water in response to abrupt changes in osmolarity. This Brucella melitensis biotype 1 (strain ATCC 23456 / CCUG 17765 / NCTC 10094 / 16M) protein is Aquaporin Z.